A 393-amino-acid polypeptide reads, in one-letter code: Phosphoglycerate kinase (393 aa).

Substrate-binding positions include 21–23 (DFN), 59–62 (HLGR), Arg-118, and Arg-151. Residues Lys-201, Glu-323, and 349 to 352 (GGDT) contribute to the ATP site.

This sequence belongs to the phosphoglycerate kinase family. In terms of assembly, monomer.

It is found in the cytoplasm. The enzyme catalyses (2R)-3-phosphoglycerate + ATP = (2R)-3-phospho-glyceroyl phosphate + ADP. The protein operates within carbohydrate degradation; glycolysis; pyruvate from D-glyceraldehyde 3-phosphate: step 2/5. This is Phosphoglycerate kinase from Pelotomaculum thermopropionicum (strain DSM 13744 / JCM 10971 / SI).